We begin with the raw amino-acid sequence, 760 residues long: MANEIITPTEGELKTIIDKTAAYAAKLGESFENKVKQREGHNAKFNFMKEGDQYYPYYRNKIVENKAKIQADAAAAAAAANPKTPSTTTTTTTTTTATTPLPTATATTTSPTPTTSSTIVPVPQTNSTQQLQQQQQQQQQTTPVFEKPQPPPPPPPKKEPTQPDPLLYILDVPDFMTPLELDTIRLTAQFIAKNGDSFFMELASREVKNSQFDFLKPTNHLYEWFRALVESYAQIIYPPQGIKEQLKSNYFSNKQTILERAMNRCEYNQLKEIEEQKKEEREDEEKTIIASIDWHDFVIVDTIEFNEDDLDDLPQPRTFDQLIAGDTPFGGSDFDNDGHGSNGKGGQDMEMEMDMEMEMDDEDNNNNEDEIEESSLSSTNTTGNLPPKDQSKLKIVKDYQKSNSSVKSNAPTKLTQLCQFCKQEIPLDEMQEHMRIELIQKQQRDSRLGGGGSSNNNNNLTNTLTQDDDIARNLQSFASKRVDIFGETESSKKQDEQPTQAPKVIWDGHSGSIPRVQAAQQAAQLAAQQAAQQKAAAIAAQQASQQQASQQQQQQLQPPQPIGIHHHPQRHLPPGMMPPGMMPPGMMPPGMMPPGMVPPPPFGMIPPGMVPPPPPGLMIPTAPPGLMIPPTQQQQLPPQTNTSPSSSSSIKVEEPQSKKLKIDDVLIPESVWLQNNPNPVNLTVEMADKSNIYQITLQPTDSISLLKEKIKELNGMPTNKQKLQAPGLSILKDTCSIAFYNLKSLAIVTCGQKKKGGKKK.

Residues 16-58 (IIDKTAAYAAKLGESFENKVKQREGHNAKFNFMKEGDQYYPYY) form an SURP motif 1 repeat. The span at 77-147 (AAAANPKTPS…QQQTTPVFEK (71 aa)) shows a compositional bias: low complexity. The tract at residues 77–165 (AAAANPKTPS…PKKEPTQPDP (89 aa)) is disordered. The SURP motif 2 repeat unit spans residues 183-225 (TIRLTAQFIAKNGDSFFMELASREVKNSQFDFLKPTNHLYEWF). Residues 259–290 (ERAMNRCEYNQLKEIEEQKKEEREDEEKTIIA) are a coiled coil. 6 disordered regions span residues 309–348 (DLDD…GGQD), 360–393 (DDED…QSKL), 442–464 (QQRD…TNTL), 487–509 (ETES…WDGH), 544–583 (SQQQ…GMMP), and 624–657 (PGLM…EPQS). Residues 360–373 (DDEDNNNNEDEIEE) are compositionally biased toward acidic residues. 2 stretches are compositionally biased toward low complexity: residues 374–385 (SSLSSTNTTGNL) and 454–464 (SNNNNNLTNTL). Basic and acidic residues predominate over residues 487 to 496 (ETESSKKQDE). 2 stretches are compositionally biased toward low complexity: residues 544–557 (SQQQ…QQLQ) and 629–649 (PPTQ…SSSS). A required and sufficient for nuclear import region spans residues 655–677 (PQSKKLKIDDVLIPESVWLQNNP). One can recognise a Ubiquitin-like domain in the interval 680–757 (VNLTVEMADK…VTCGQKKKGG (78 aa)).

The protein belongs to the SF3A1 family. Component of splicing factor SF3A which associates with the splicing factor SF3B and a 12S RNA unit to form the mature 17S U2 small nuclear ribonucleoprotein complex (17S U2 snRNP). Identified in the spliceosome 'E' complex, a precursor of the spliceosome 'A' complex. Identified in the spliceosome 'A' and 'B' complexes. Identified in the spliceosome 'C' complex.

The protein localises to the nucleus. Its function is as follows. Involved in pre-mRNA splicing as a component of the splicing factor SF3A complex that contributes to the assembly of the 17S U2 snRNP, and the subsequent assembly of the spliceosome. This chain is Probable splicing factor 3A subunit 1 (sf3a1), found in Dictyostelium discoideum (Social amoeba).